The following is a 537-amino-acid chain: Phosphoenolpyruvate carboxykinase (ATP) (537 aa).

Substrate is bound by residues Arg-61, Tyr-195, and Lys-201. Residues Lys-201, His-220, and Gly-236 to Thr-244 contribute to the ATP site. Lys-201 and His-220 together coordinate Mn(2+). Asp-257 is a Mn(2+) binding site. Residues Glu-285, Arg-323, and Thr-448 each contribute to the ATP site. Arg-323 contributes to the substrate binding site.

The protein belongs to the phosphoenolpyruvate carboxykinase (ATP) family. Mn(2+) is required as a cofactor.

Its subcellular location is the cytoplasm. The catalysed reaction is oxaloacetate + ATP = phosphoenolpyruvate + ADP + CO2. It participates in carbohydrate biosynthesis; gluconeogenesis. In terms of biological role, involved in the gluconeogenesis. Catalyzes the conversion of oxaloacetate (OAA) to phosphoenolpyruvate (PEP) through direct phosphoryl transfer between the nucleoside triphosphate and OAA. This is Phosphoenolpyruvate carboxykinase (ATP) from Parvibaculum lavamentivorans (strain DS-1 / DSM 13023 / NCIMB 13966).